The chain runs to 877 residues: (E,E)-geranyllinalool synthase (877 aa).

Mg(2+)-binding residues include Asp-540 and Asp-544. Residues Asp-540, Asp-544, Arg-677, and Asn-680 each coordinate substrate. Residues 540 to 544 (DDFFD) carry the DDXXD motif motif. Mg(2+)-binding residues include Asn-680, Ser-684, and Glu-688.

It belongs to the terpene synthase family. Tpsf subfamily. Mg(2+) serves as cofactor. The cofactor is Mn(2+). In terms of tissue distribution, expressed in leaves and flowers.

The protein localises to the cytoplasm. It catalyses the reaction (2E,6E,10E)-geranylgeranyl diphosphate + H2O = (6E,10E)-geranyllinalool + diphosphate. The protein operates within secondary metabolite biosynthesis; terpenoid biosynthesis. In terms of biological role, involved in the biosynthesis of homoterpenes, attractants of herbivores parasitoids and predators (e.g. predatory mites and parasitoid wasps). Involved in diterpene (C20) biosynthesis. Catalyzes the conversion of geranylgeranyl diphosphate to (E,E)-geranyllinalool, the precursor of the insect-induced volatile C16-homoterpene TMTT. This chain is (E,E)-geranyllinalool synthase, found in Arabidopsis thaliana (Mouse-ear cress).